A 210-amino-acid chain; its full sequence is Putative methyltransferase ECU09_1500 (210 aa).

Belongs to the methyltransferase superfamily.

The polypeptide is Putative methyltransferase ECU09_1500 (Encephalitozoon cuniculi (strain GB-M1) (Microsporidian parasite)).